A 699-amino-acid chain; its full sequence is Elongation factor G (699 aa).

Residues 8 to 283 (EHIRNIGICA…AVVDFLPSPI (276 aa)) form the tr-type G domain. Residues 17–24 (AHIDAGKT), 81–85 (DTPGH), and 135–138 (NKMD) each bind GTP.

Belongs to the TRAFAC class translation factor GTPase superfamily. Classic translation factor GTPase family. EF-G/EF-2 subfamily.

It localises to the cytoplasm. Functionally, catalyzes the GTP-dependent ribosomal translocation step during translation elongation. During this step, the ribosome changes from the pre-translocational (PRE) to the post-translocational (POST) state as the newly formed A-site-bound peptidyl-tRNA and P-site-bound deacylated tRNA move to the P and E sites, respectively. Catalyzes the coordinated movement of the two tRNA molecules, the mRNA and conformational changes in the ribosome. In Rickettsia africae (strain ESF-5), this protein is Elongation factor G.